A 150-amino-acid polypeptide reads, in one-letter code: Lymphotoxin-beta (150 aa).

Residues 1–149 (AWITGQGLGW…GKTFFGAVMV (149 aa)) enclose the THD domain. An N-linked (GlcNAc...) asparagine glycan is attached at N128.

It belongs to the tumor necrosis factor family. Heterotrimer of either two LTB and one LTA subunits or (less prevalent) two LTA and one LTB subunits.

Its subcellular location is the membrane. Its function is as follows. Cytokine that binds to LTBR/TNFRSF3. May play a specific role in immune response regulation. Provides the membrane anchor for the attachment of the heterotrimeric complex to the cell surface. The sequence is that of Lymphotoxin-beta (LTB) from Sus scrofa (Pig).